Reading from the N-terminus, the 192-residue chain is Cytidylate kinase (192 aa).

Residue 12 to 20 participates in ATP binding; that stretch reads GLAGSGTTT.

Belongs to the cytidylate kinase family. Type 2 subfamily.

The protein resides in the cytoplasm. It catalyses the reaction CMP + ATP = CDP + ADP. The enzyme catalyses dCMP + ATP = dCDP + ADP. This is Cytidylate kinase from Pyrococcus furiosus (strain ATCC 43587 / DSM 3638 / JCM 8422 / Vc1).